Here is a 211-residue protein sequence, read N- to C-terminus: tRNA (guanine-N(7)-)-methyltransferase (211 aa).

S-adenosyl-L-methionine-binding residues include E44, D69, D96, and D118. D118 is an active-site residue. A substrate-binding site is contributed by K122. An interaction with RNA region spans residues 124–129; the sequence is RHEKRR. Substrate-binding positions include D154 and 191 to 194; that span reads TEYE.

The protein belongs to the class I-like SAM-binding methyltransferase superfamily. TrmB family.

The enzyme catalyses guanosine(46) in tRNA + S-adenosyl-L-methionine = N(7)-methylguanosine(46) in tRNA + S-adenosyl-L-homocysteine. It functions in the pathway tRNA modification; N(7)-methylguanine-tRNA biosynthesis. Its function is as follows. Catalyzes the formation of N(7)-methylguanine at position 46 (m7G46) in tRNA. The chain is tRNA (guanine-N(7)-)-methyltransferase from Streptococcus equi subsp. zooepidemicus (strain MGCS10565).